Reading from the N-terminus, the 224-residue chain is Urease accessory protein UreF (224 aa).

The protein belongs to the UreF family. As to quaternary structure, ureD, UreF and UreG form a complex that acts as a GTP-hydrolysis-dependent molecular chaperone, activating the urease apoprotein by helping to assemble the nickel containing metallocenter of UreC. The UreE protein probably delivers the nickel.

The protein resides in the cytoplasm. Required for maturation of urease via the functional incorporation of the urease nickel metallocenter. This Pseudomonas savastanoi pv. phaseolicola (strain 1448A / Race 6) (Pseudomonas syringae pv. phaseolicola (strain 1448A / Race 6)) protein is Urease accessory protein UreF.